The primary structure comprises 264 residues: Thymidylate synthase (264 aa).

R21 is a binding site for dUMP. Position 51 (H51) interacts with (6R)-5,10-methylene-5,6,7,8-tetrahydrofolate. R126–R127 lines the dUMP pocket. Catalysis depends on C146, which acts as the Nucleophile. DUMP is bound by residues R166–D169, N177, and H207–Y209. D169 lines the (6R)-5,10-methylene-5,6,7,8-tetrahydrofolate pocket. Residue A263 coordinates (6R)-5,10-methylene-5,6,7,8-tetrahydrofolate.

This sequence belongs to the thymidylate synthase family. Bacterial-type ThyA subfamily. As to quaternary structure, homodimer.

The protein localises to the cytoplasm. It catalyses the reaction dUMP + (6R)-5,10-methylene-5,6,7,8-tetrahydrofolate = 7,8-dihydrofolate + dTMP. It functions in the pathway pyrimidine metabolism; dTTP biosynthesis. Catalyzes the reductive methylation of 2'-deoxyuridine-5'-monophosphate (dUMP) to 2'-deoxythymidine-5'-monophosphate (dTMP) while utilizing 5,10-methylenetetrahydrofolate (mTHF) as the methyl donor and reductant in the reaction, yielding dihydrofolate (DHF) as a by-product. This enzymatic reaction provides an intracellular de novo source of dTMP, an essential precursor for DNA biosynthesis. In Rhodopirellula baltica (strain DSM 10527 / NCIMB 13988 / SH1), this protein is Thymidylate synthase.